Reading from the N-terminus, the 367-residue chain is Cyclic AMP-responsive element-binding protein 3-like protein 4 (367 aa).

The interval 1-52 (MELGCPELLEPPEDIFSTGSFLELGFNGPPSKVPGLQKSESDDFLNLFIDPN) is required for transcriptional activation. Over 1 to 267 (MELGCPELLE…QTSSRAAQTS (267 aa)) the chain is Cytoplasmic. The disordered stretch occupies residues 58 to 81 (ETSPGSDSGVSEDPGSPAPQAPSS). Residues 189–252 (ILKKIRRKIR…ISLVAQVHQL (64 aa)) enclose the bZIP domain. The interval 191–230 (KKIRRKIRNKQSAQDSRRRKKEYIDGLESRVAACSEQNQK) is basic motif. The leucine-zipper stretch occupies residues 231–252 (LQRKVQELERQNISLVAQVHQL). A helical; Signal-anchor for type II membrane protein transmembrane segment spans residues 268–288 (TCVLILLFSLALIILPSFSPF). Topologically, residues 289–367 (QSQPEARSEG…IRGMVHADEM (79 aa)) are lumenal. Residue N338 is glycosylated (N-linked (GlcNAc...) asparagine).

This sequence belongs to the bZIP family. ATF subfamily. In terms of assembly, binds DNA as a dimer. Forms a heterodimer with CREM isoform Delta. Controlled by regulated intramembrane proteolysis (RIP). Following ER stress a fragment containing the cytoplasmic transcription factor domain is released by proteolysis. The cleavage seems to be performed sequentially by site-1 and site-2 proteases (PS1 and PS2). PS1 cleavage may be suppressed by a determinant in the C-terminal region.

It localises to the endoplasmic reticulum membrane. The protein localises to the nucleus. Its function is as follows. Transcriptional activator that may play a role in the unfolded protein response. Binds to the UPR element (UPRE) but not to CRE element. Preferentially binds DNA with to the consensus sequence 5'-T[GT]ACGT[GA][GT]-3' and has transcriptional activation activity from UPRE. Binds to NF-kappa-B site and has transcriptional activation activity from NF-kappa-B-containing regulatory elements. Increases the binding of CREM isoform Delta with CRE. The CREM isoform Delta-CREB3L4 heterodimer functions through CRE but not through UPRE and may recruit HIRA to CRE to regulate histone exchange. The protein is Cyclic AMP-responsive element-binding protein 3-like protein 4 (Creb3l4) of Rattus norvegicus (Rat).